The following is an 80-amino-acid chain: ATP synthase subunit c (80 aa).

2 helical membrane-spanning segments follow: residues 11-31 (IAAA…IGIL) and 53-73 (FFIV…LGLY).

This sequence belongs to the ATPase C chain family. In terms of assembly, F-type ATPases have 2 components, F(1) - the catalytic core - and F(0) - the membrane proton channel. F(1) has five subunits: alpha(3), beta(3), gamma(1), delta(1), epsilon(1). F(0) has three main subunits: a(1), b(2) and c(10-14). The alpha and beta chains form an alternating ring which encloses part of the gamma chain. F(1) is attached to F(0) by a central stalk formed by the gamma and epsilon chains, while a peripheral stalk is formed by the delta and b chains.

The protein resides in the cell inner membrane. F(1)F(0) ATP synthase produces ATP from ADP in the presence of a proton or sodium gradient. F-type ATPases consist of two structural domains, F(1) containing the extramembraneous catalytic core and F(0) containing the membrane proton channel, linked together by a central stalk and a peripheral stalk. During catalysis, ATP synthesis in the catalytic domain of F(1) is coupled via a rotary mechanism of the central stalk subunits to proton translocation. In terms of biological role, key component of the F(0) channel; it plays a direct role in translocation across the membrane. A homomeric c-ring of between 10-14 subunits forms the central stalk rotor element with the F(1) delta and epsilon subunits. This chain is ATP synthase subunit c, found in Aeromonas hydrophila subsp. hydrophila (strain ATCC 7966 / DSM 30187 / BCRC 13018 / CCUG 14551 / JCM 1027 / KCTC 2358 / NCIMB 9240 / NCTC 8049).